Consider the following 380-residue polypeptide: Cytochrome b (380 aa).

4 helical membrane passes run 34-54 (YGSLLGLCLMTQILTGLFLAM), 78-99 (WLMRNIHANGASFFFICIYLHI), 114-134 (WNIGVILLLLVMATAFVGYVL), and 179-199 (FFTFHFLLPFLIAGTSMLHLL). The heme b site is built by His84 and His98. His183 and His197 together coordinate heme b. His202 provides a ligand contact to a ubiquinone. 4 helical membrane-spanning segments follow: residues 227–247 (YKDTFGFMIMLAALALLSTTN), 289–309 (LGGVLALLFSIMILMLIPSLH), 321–341 (LSQLMFWSIIANTLVLTWIGG), and 348–368 (FILIGQISSALYFILFLVLLP).

The protein belongs to the cytochrome b family. The cytochrome bc1 complex contains 3 respiratory subunits (MT-CYB, CYC1 and UQCRFS1), 2 core proteins (UQCRC1 and UQCRC2) and probably 6 low-molecular weight proteins. It depends on heme b as a cofactor.

Its subcellular location is the mitochondrion inner membrane. Its function is as follows. Component of the ubiquinol-cytochrome c reductase complex (complex III or cytochrome b-c1 complex) that is part of the mitochondrial respiratory chain. The b-c1 complex mediates electron transfer from ubiquinol to cytochrome c. Contributes to the generation of a proton gradient across the mitochondrial membrane that is then used for ATP synthesis. This chain is Cytochrome b (mt-cyb), found in Typhlonectes natans (Rubber eel).